We begin with the raw amino-acid sequence, 303 residues long: 34 kDa antigenic protein homolog (303 aa).

A run of 4 helical transmembrane segments spans residues 42–62 (IAVAVLGLAAYFASFGPMFTL), 77–97 (TGLPVGVALLAALLAGVALVP), 102–122 (HVTVVAVLGVLGVFLMVSATF), and 134–154 (LWVVLAFIVFQAVAAVLALLV). 2 stretches are compositionally biased toward low complexity: residues 194 to 207 (QGAQQAAGLQSPGP) and 215 to 255 (GYGS…HQGP). A disordered region spans residues 194–303 (QGAQQAAGLQ…QSSSPGGAPV (110 aa)). Residues 256–271 (STPPTGFPSFSPPPPV) show a composition bias toward pro residues. The span at 274-286 (GTGSQAGSAPVNY) shows a compositional bias: polar residues. Over residues 287 to 303 (SNPSGGEQSSSPGGAPV) the composition is skewed to low complexity.

The protein to M.paratuberculosis 34 kDa antigenic protein.

It localises to the cell membrane. The protein is 34 kDa antigenic protein homolog of Mycobacterium bovis (strain ATCC BAA-935 / AF2122/97).